The sequence spans 270 residues: Mediator of RNA polymerase II transcription subunit 4 (270 aa).

Residues 1 to 22 form a disordered region; sequence MAASSSGEKEKERMGGVSGMTG. Ala-2 is modified (N-acetylalanine). A coiled-coil region spans residues 26–131; it reads TRERLLSALE…ATAVYQAKEK (106 aa). Position 32 is a phosphoserine (Ser-32). Residues 227 to 270 are disordered; the sequence is MSVNMLPPNHSTDFLLEPPGHNKENEDDVEVMSTDSSSSSSDSD. Residues 259–270 show a composition bias toward low complexity; it reads STDSSSSSSDSD.

It belongs to the Mediator complex subunit 4 family. As to quaternary structure, component of the Mediator complex, which is composed of MED1, MED4, MED6, MED7, MED8, MED9, MED10, MED11, MED12, MED13, MED13L, MED14, MED15, MED16, MED17, MED18, MED19, MED20, MED21, MED22, MED23, MED24, MED25, MED26, MED27, MED29, MED30, MED31, CCNC, CDK8 and CDC2L6/CDK11. The MED12, MED13, CCNC and CDK8 subunits form a distinct module termed the CDK8 module. Mediator containing the CDK8 module is less active than Mediator lacking this module in supporting transcriptional activation. Individual preparations of the Mediator complex lacking one or more distinct subunits have been variously termed ARC, CRSP, DRIP, PC2, SMCC and TRAP.

It localises to the nucleus. Its function is as follows. Component of the Mediator complex, a coactivator involved in the regulated transcription of nearly all RNA polymerase II-dependent genes. Mediator functions as a bridge to convey information from gene-specific regulatory proteins to the basal RNA polymerase II transcription machinery. Mediator is recruited to promoters by direct interactions with regulatory proteins and serves as a scaffold for the assembly of a functional preinitiation complex with RNA polymerase II and the general transcription factors. In Rattus norvegicus (Rat), this protein is Mediator of RNA polymerase II transcription subunit 4 (Med4).